Consider the following 143-residue polypeptide: Sirohydrochlorin cobaltochelatase (143 aa).

Residue H18 is the Proton acceptor of the active site. H18 contributes to the Co(2+) binding site. Residue H18 participates in Ni(2+) binding. Substrate-binding positions include R53 and 78 to 83 (LAHGVH). H83 contributes to the Co(2+) binding site. H83 is a binding site for Ni(2+).

This sequence belongs to the CbiX family. CbiXS subfamily. As to quaternary structure, homotetramer; dimer of dimers.

It catalyses the reaction Co-sirohydrochlorin + 2 H(+) = sirohydrochlorin + Co(2+). It carries out the reaction Ni-sirohydrochlorin + 2 H(+) = sirohydrochlorin + Ni(2+). It participates in cofactor biosynthesis; adenosylcobalamin biosynthesis; cob(II)yrinate a,c-diamide from sirohydrochlorin (anaerobic route): step 1/10. Catalyzes the insertion of Co(2+) into sirohydrochlorin as part of the anaerobic pathway to cobalamin biosynthesis. Involved in the biosynthesis of the unique nickel-containing tetrapyrrole coenzyme F430, the prosthetic group of methyl-coenzyme M reductase (MCR), which plays a key role in methanogenesis and anaerobic methane oxidation (Potential). Catalyzes the insertion of Ni(2+) into sirohydrochlorin to yield Ni-sirohydrochlorin (Potential). The polypeptide is Sirohydrochlorin cobaltochelatase (Methanothermobacter thermautotrophicus (strain ATCC 29096 / DSM 1053 / JCM 10044 / NBRC 100330 / Delta H) (Methanobacterium thermoautotrophicum)).